Consider the following 260-residue polypeptide: Ribonuclease PH (260 aa).

Phosphate is bound by residues Arg88 and 126-128 (GTR).

The protein belongs to the RNase PH family. Homohexameric ring arranged as a trimer of dimers.

It carries out the reaction tRNA(n+1) + phosphate = tRNA(n) + a ribonucleoside 5'-diphosphate. Its function is as follows. Phosphorolytic 3'-5' exoribonuclease that plays an important role in tRNA 3'-end maturation. Removes nucleotide residues following the 3'-CCA terminus of tRNAs; can also add nucleotides to the ends of RNA molecules by using nucleoside diphosphates as substrates, but this may not be physiologically important. Probably plays a role in initiation of 16S rRNA degradation (leading to ribosome degradation) during starvation. In Mycobacterium sp. (strain JLS), this protein is Ribonuclease PH.